We begin with the raw amino-acid sequence, 383 residues long: La protein homolog (383 aa).

The segment at 1 to 43 (MTEVEAKATATEETTKEEEEAPETTAEQTEESAQETSENVSKL) is disordered. The span at 15 to 33 (TKEEEEAPETTAEQTEESA) shows a compositional bias: acidic residues. Residues 37–129 (SENVSKLEAS…RRHPERPLPE (93 aa)) enclose the HTH La-type RNA-binding domain. The RRM domain maps to 141–228 (RTVYVKGFAP…RKMQDDYFEE (88 aa)). The region spanning 249–368 (HLPKGASVHL…RTPEGRQASR (120 aa)) is the xRRM domain. The disordered stretch occupies residues 343–383 (KDQQARRQASNARNKGRTPEGRQASRPPQEWRRKAKGGRGE).

The protein resides in the nucleus. It is found in the cytoplasm. In terms of biological role, may be involved in transcription termination by RNA polymerase III. Binds RNA and DNA. Binds to the 3' end of the minus strand of Sindbis virus RNA. This may be significant for Sindbis virus RNA replication. In Aedes albopictus (Asian tiger mosquito), this protein is La protein homolog.